A 345-amino-acid polypeptide reads, in one-letter code: Holliday junction branch migration complex subunit RuvB (345 aa).

Residues 3-187 form a large ATPase domain (RuvB-L) region; that stretch reads LDILQNRNNL…FGFTARLDFY (185 aa). ATP is bound by residues leucine 26, arginine 27, glycine 68, lysine 71, threonine 72, threonine 73, 134-136, arginine 177, tyrosine 187, and arginine 224; that span reads EDF. Threonine 72 lines the Mg(2+) pocket. The small ATPAse domain (RuvB-S) stretch occupies residues 188-259; it reads SPEELLQVLI…IALKAMDVYE (72 aa). Residues 262-345 form a head domain (RuvB-H) region; that stretch reads SLGLDRLDRA…EDLSGFELYL (84 aa). Residues arginine 317 and arginine 322 each contribute to the DNA site.

It belongs to the RuvB family. As to quaternary structure, homohexamer. Forms an RuvA(8)-RuvB(12)-Holliday junction (HJ) complex. HJ DNA is sandwiched between 2 RuvA tetramers; dsDNA enters through RuvA and exits via RuvB. An RuvB hexamer assembles on each DNA strand where it exits the tetramer. Each RuvB hexamer is contacted by two RuvA subunits (via domain III) on 2 adjacent RuvB subunits; this complex drives branch migration. In the full resolvosome a probable DNA-RuvA(4)-RuvB(12)-RuvC(2) complex forms which resolves the HJ.

Its subcellular location is the cytoplasm. The catalysed reaction is ATP + H2O = ADP + phosphate + H(+). In terms of biological role, the RuvA-RuvB-RuvC complex processes Holliday junction (HJ) DNA during genetic recombination and DNA repair, while the RuvA-RuvB complex plays an important role in the rescue of blocked DNA replication forks via replication fork reversal (RFR). RuvA specifically binds to HJ cruciform DNA, conferring on it an open structure. The RuvB hexamer acts as an ATP-dependent pump, pulling dsDNA into and through the RuvAB complex. RuvB forms 2 homohexamers on either side of HJ DNA bound by 1 or 2 RuvA tetramers; 4 subunits per hexamer contact DNA at a time. Coordinated motions by a converter formed by DNA-disengaged RuvB subunits stimulates ATP hydrolysis and nucleotide exchange. Immobilization of the converter enables RuvB to convert the ATP-contained energy into a lever motion, pulling 2 nucleotides of DNA out of the RuvA tetramer per ATP hydrolyzed, thus driving DNA branch migration. The RuvB motors rotate together with the DNA substrate, which together with the progressing nucleotide cycle form the mechanistic basis for DNA recombination by continuous HJ branch migration. Branch migration allows RuvC to scan DNA until it finds its consensus sequence, where it cleaves and resolves cruciform DNA. This chain is Holliday junction branch migration complex subunit RuvB, found in Tropheryma whipplei (strain TW08/27) (Whipple's bacillus).